The following is a 226-amino-acid chain: Uracil-DNA glycosylase (226 aa).

The active-site Proton acceptor is Asp-65.

The protein belongs to the uracil-DNA glycosylase (UDG) superfamily. UNG family.

It is found in the cytoplasm. It carries out the reaction Hydrolyzes single-stranded DNA or mismatched double-stranded DNA and polynucleotides, releasing free uracil.. Its function is as follows. Excises uracil residues from the DNA which can arise as a result of misincorporation of dUMP residues by DNA polymerase or due to deamination of cytosine. In Bacillus pumilus (strain SAFR-032), this protein is Uracil-DNA glycosylase.